We begin with the raw amino-acid sequence, 88 residues long: Small ribosomal subunit protein bS20 (88 aa).

The interval 1–27 is disordered; the sequence is MANSKSAKKRALQSEKRRQHNASRRSM.

It belongs to the bacterial ribosomal protein bS20 family.

In terms of biological role, binds directly to 16S ribosomal RNA. In Shewanella woodyi (strain ATCC 51908 / MS32), this protein is Small ribosomal subunit protein bS20.